The primary structure comprises 288 residues: 33 kDa chaperonin (288 aa).

Cystine bridges form between Cys236–Cys238 and Cys269–Cys272.

The protein belongs to the HSP33 family. In terms of processing, under oxidizing conditions two disulfide bonds are formed involving the reactive cysteines. Under reducing conditions zinc is bound to the reactive cysteines and the protein is inactive.

The protein resides in the cytoplasm. In terms of biological role, redox regulated molecular chaperone. Protects both thermally unfolding and oxidatively damaged proteins from irreversible aggregation. Plays an important role in the bacterial defense system toward oxidative stress. The chain is 33 kDa chaperonin from Lactococcus lactis subsp. lactis (strain IL1403) (Streptococcus lactis).